Here is a 683-residue protein sequence, read N- to C-terminus: FAD-binding monooxygenase ausC (683 aa).

The N-linked (GlcNAc...) asparagine glycan is linked to Asn5. A helical transmembrane segment spans residues 111–131; that stretch reads ILIIGAGFGGLLFAVRLIQTG. FAD-binding positions include 150 to 153, 162 to 163, and Tyr168; these read TWYW and DT. 160–162 is a binding site for NADP(+); that stretch reads MCD. Asn286 carries N-linked (GlcNAc...) asparagine glycosylation. Residues 310-316 and 333-334 contribute to the NADP(+) site; these read TGASAVQ and RT. N-linked (GlcNAc...) asparagine glycans are attached at residues Asn525 and Asn572.

This sequence belongs to the FAD-binding monooxygenase family. Requires FAD as cofactor.

It localises to the membrane. The catalysed reaction is preaustinoid A + AH2 + O2 = preaustinoid A1 + A + H2O. The protein operates within secondary metabolite biosynthesis; terpenoid biosynthesis. In terms of biological role, FAD-binding monooxygenase; part of the gene cluster A that mediates the biosynthesis of austinol and dehydroaustinol, two fungal meroterpenoids. The first step of the pathway is the synthesis of 3,5-dimethylorsellinic acid by the polyketide synthase ausA. 3,5-dimethylorsellinic acid is then prenylated by the polyprenyl transferase ausN. Further epoxidation by the FAD-dependent monooxygenase ausM and cyclization by the probable terpene cyclase ausL lead to the formation of protoaustinoid A. Protoaustinoid A is then oxidized to spiro-lactone preaustinoid A3 by the combined action of the FAD-binding monooxygenases ausB and ausC, and the dioxygenase ausE. Acid-catalyzed keto-rearrangement and ring contraction of the tetraketide portion of preaustinoid A3 by ausJ lead to the formation of preaustinoid A4. The aldo-keto reductase ausK, with the help of ausH, is involved in the next step by transforming preaustinoid A4 into isoaustinone which is in turn hydroxylated by the P450 monooxygenase ausI to form austinolide. Finally, the cytochrome P450 monooxygenase ausG modifies austinolide to austinol. Austinol can be further modified to dehydroaustinol which forms a diffusible complex with diorcinol that initiates conidiation. Due to genetic rearrangements of the clusters and the subsequent loss of some enzymes, the end products of the Emericella nidulans austinoid biosynthesis clusters are austinol and dehydroaustinol, even if additional enzymes, such as the O-acetyltransferase ausQ and the cytochrome P450 monooxygenase ausR are still functional. This is FAD-binding monooxygenase ausC from Emericella nidulans (strain FGSC A4 / ATCC 38163 / CBS 112.46 / NRRL 194 / M139) (Aspergillus nidulans).